The sequence spans 672 residues: DNA ligase (672 aa).

NAD(+) contacts are provided by residues 32-36 (DEKYD), 82-83 (SL), and Glu113. Catalysis depends on Lys115, which acts as the N6-AMP-lysine intermediate. NAD(+)-binding residues include Arg136, Glu173, Lys290, and Lys314. Zn(2+) contacts are provided by Cys408, Cys411, Cys427, and Cys433. In terms of domain architecture, BRCT spans 592-672 (DNNNTLFRKK…EFLNIINVYL (81 aa)).

It belongs to the NAD-dependent DNA ligase family. LigA subfamily. Requires Mg(2+) as cofactor. Mn(2+) is required as a cofactor.

The catalysed reaction is NAD(+) + (deoxyribonucleotide)n-3'-hydroxyl + 5'-phospho-(deoxyribonucleotide)m = (deoxyribonucleotide)n+m + AMP + beta-nicotinamide D-nucleotide.. DNA ligase that catalyzes the formation of phosphodiester linkages between 5'-phosphoryl and 3'-hydroxyl groups in double-stranded DNA using NAD as a coenzyme and as the energy source for the reaction. It is essential for DNA replication and repair of damaged DNA. The protein is DNA ligase of Buchnera aphidicola subsp. Baizongia pistaciae (strain Bp).